The sequence spans 540 residues: Chaperonin GroEL (540 aa).

ATP-binding positions include 29-32 (TIGP), 86-90 (DGTTT), Gly-413, 476-478 (NAA), and Asp-492.

Belongs to the chaperonin (HSP60) family. As to quaternary structure, forms a cylinder of 14 subunits composed of two heptameric rings stacked back-to-back. Interacts with the co-chaperonin GroES.

It is found in the cytoplasm. The enzyme catalyses ATP + H2O + a folded polypeptide = ADP + phosphate + an unfolded polypeptide.. In terms of biological role, together with its co-chaperonin GroES, plays an essential role in assisting protein folding. The GroEL-GroES system forms a nano-cage that allows encapsulation of the non-native substrate proteins and provides a physical environment optimized to promote and accelerate protein folding. In Staphylococcus carnosus (strain TM300), this protein is Chaperonin GroEL.